Here is a 364-residue protein sequence, read N- to C-terminus: Zinc finger protein 474 (364 aa).

Positions 1–10 are enriched in basic residues; it reads MERGKKKRIS. Disordered stretches follow at residues 1–21 and 37–60; these read MERGKKKRISNKLQQTFHHSK and SYSSLSPETESVNPGENIKTDTQK. The segment at 93–122 adopts a C2HC/C3H-type 1 zinc-finger fold; it reads GFRVCYICGREFGSQSIAIHEPQCLQKWHI. 4 residues coordinate Zn(2+): C97, C100, H112, and C116. The tract at residues 127-147 is disordered; the sequence is LPKHLRRPEPSKPQSLSSSGS. Residues 138–147 show a composition bias toward low complexity; it reads KPQSLSSSGS. 3 C2HC/C3H-type zinc fingers span residues 164–193, 220–249, and 283–312; these read QLLPCESCGRTFLPDHLLVHHRSCKPKGEG, RTVICYICGKEFGTLSLPIHEPKCLEKWKM, and QLVFCPHCSRIFTSDRLLVHQRSCKTHPYG. Zn(2+)-binding residues include C168, C171, H183, C187, C224, C227, H239, C243, C287, C290, H302, and C306. Positions 187 to 214 are disordered; that stretch reads CKPKGEGPRAPHSNSSDHLTGLKKACSG.

Zn(2+) serves as cofactor.

The polypeptide is Zinc finger protein 474 (ZNF474) (Homo sapiens (Human)).